A 377-amino-acid chain; its full sequence is MSEGLYEKFLAPDEPFPLLSQRGSVSEEGCLDVSDFGCQLSSCHRTDPRLHRFHSNRWNLTSCGTSVASSECSEELFSSVSVGDQDDCYSLLDDQDFTSFDLFPEGSVCSDVSSSISTYWDWSDSEFEWQLPGSDIASGSDVLSDIIPSIPNSPCLPSKKKNKHRNLDELPWSAMTNDEQVEYIEYLSRKVSTEMGLREQLDIIKIIDPTAQISPTDSEFIIELNCLTDEKLKQVRSYIKEHSPRQRCTRESWKRTSYSTASTSGVSGASVSSSSASMVSTASSTGSSGGNSASNSSANMSRTHSDNNLSASAAERIRDSKKRSKQRKLQQKALRKRQLKEQRQARKERISGLFLNEEVLSVKVNEEDHEGDVDVLM.

A compositionally biased stretch (basic and acidic residues) spans 240-254 (KEHSPRQRCTRESWK). The disordered stretch occupies residues 240-350 (KEHSPRQRCT…EQRQARKERI (111 aa)). Positions 256–301 (TSYSTASTSGVSGASVSSSSASMVSTASSTGSSGGNSASNSSANMS) are enriched in low complexity. The span at 319-338 (DSKKRSKQRKLQQKALRKRQ) shows a compositional bias: basic residues. Positions 321–349 (KKRSKQRKLQQKALRKRQLKEQRQARKER) form a coiled coil. Positions 339-350 (LKEQRQARKERI) are enriched in basic and acidic residues.

Belongs to the FAM199 family.

The sequence is that of Protein FAM199X-B (fam199x-b) from Xenopus laevis (African clawed frog).